A 341-amino-acid chain; its full sequence is Methionine import ATP-binding protein MetN 1 (341 aa).

Positions 2 to 241 (IKLNQIVKRY…PQHEVTKRFV (240 aa)) constitute an ABC transporter domain. Residue 38-45 (GFSGAGKS) participates in ATP binding.

The protein belongs to the ABC transporter superfamily. Methionine importer (TC 3.A.1.24) family. In terms of assembly, the complex is composed of two ATP-binding proteins (MetN), two transmembrane proteins (MetI) and a solute-binding protein (MetQ).

It is found in the cell membrane. The catalysed reaction is L-methionine(out) + ATP + H2O = L-methionine(in) + ADP + phosphate + H(+). It carries out the reaction D-methionine(out) + ATP + H2O = D-methionine(in) + ADP + phosphate + H(+). In terms of biological role, part of the ABC transporter complex MetNIQ involved in methionine import. Responsible for energy coupling to the transport system. In Staphylococcus epidermidis (strain ATCC 12228 / FDA PCI 1200), this protein is Methionine import ATP-binding protein MetN 1.